A 549-amino-acid polypeptide reads, in one-letter code: Calcium-dependent protein kinase 5 (549 aa).

Gly2 carries N-myristoyl glycine lipidation. The interval 43–69 (DEPAGKKAPRGSAAAADAPHAASMKRG) is disordered. Residues 52–64 (RGSAAAADAPHAA) are compositionally biased toward low complexity. One can recognise a Protein kinase domain in the interval 92-350 (YALGRKLGQG…AHEVLCHPWI (259 aa)). ATP is bound by residues 98-106 (LGQGQFGTT) and Lys121. Asp216 (proton acceptor) is an active-site residue. Residues 356–386 (APDRPLDPAVLSRIKQFSAMNKLKKMALRVI) form an autoinhibitory domain region. 4 consecutive EF-hand domains span residues 393–428 (EEIAGLKEMFKAMDTDNSGAITYDELKEGMRKYGST), 429–464 (LKDTEIRDLMEAADVDNSGTIDYIEFIAATLHLNKL), 465–500 (EREEHLVAAFSYFDKDGSGYITVDELQQACKEHNMP), and 501–534 (DAFLDDVIKEADQDNDGRIDYGEFVAMMTKGNMG). Asp406, Asp408, Ser410, Glu417, Asp442, Asp444, Ser446, Thr448, Glu453, Asp478, Asp480, Ser482, Tyr484, Glu489, Asp512, Asp514, Asp516, Arg518, and Glu523 together coordinate Ca(2+).

It belongs to the protein kinase superfamily. Ser/Thr protein kinase family. CDPK subfamily.

It localises to the membrane. It catalyses the reaction L-seryl-[protein] + ATP = O-phospho-L-seryl-[protein] + ADP + H(+). The enzyme catalyses L-threonyl-[protein] + ATP = O-phospho-L-threonyl-[protein] + ADP + H(+). With respect to regulation, activated by calcium. Autophosphorylation may play an important role in the regulation of the kinase activity. Its function is as follows. May play a role in signal transduction pathways that involve calcium as a second messenger. In Oryza sativa subsp. japonica (Rice), this protein is Calcium-dependent protein kinase 5.